A 304-amino-acid chain; its full sequence is MPPVPLLTAPTAAGKSALALALGRQFGLEVIAADAFTVYRGLDIGTAKPTPAERAQVPHHLLDVVDVTEDYDVARYTRAAESAIADVLARGRVPLVVGGTGFYLSALVRGLPLTPPADPQMRAEVEADLAARGLDALLAEVAAANPAEAVRLERNPRRVVRALEVYRRTGRFPGEFGYRPPAFRYRMFAFTHPWPELEARVAARTRTMLAQGWPEEAAWLAQQVAPDQEPRPTVWQALGYREALAVHAGTLDPEAAARQITLATRQYAKRQLTWVRTQLGTSPVTPSQAAEALVAFLSGGGLSA.

9 to 16 (APTAAGKS) lines the ATP pocket. Residue 11–16 (TAAGKS) participates in substrate binding.

Belongs to the IPP transferase family. In terms of assembly, monomer. The cofactor is Mg(2+).

The catalysed reaction is adenosine(37) in tRNA + dimethylallyl diphosphate = N(6)-dimethylallyladenosine(37) in tRNA + diphosphate. Its function is as follows. Catalyzes the transfer of a dimethylallyl group onto the adenine at position 37 in tRNAs that read codons beginning with uridine, leading to the formation of N6-(dimethylallyl)adenosine (i(6)A). The polypeptide is tRNA dimethylallyltransferase (Deinococcus geothermalis (strain DSM 11300 / CIP 105573 / AG-3a)).